A 605-amino-acid polypeptide reads, in one-letter code: Apoptosis-inducing factor 3 (605 aa).

Residues 18 to 29 are compositionally biased toward basic and acidic residues; that stretch reads VLPEKERGKEEL. The interval 18-44 is disordered; the sequence is VLPEKERGKEELSASGKGSPRGYQGNG. Positions 70–165 constitute a Rieske domain; the sequence is ATVCHVKDLE…VKIEKEKVTI (96 aa). 4 residues coordinate [2Fe-2S] cluster: Cys109, His111, Cys128, and His131. FAD-binding positions include 201-205, Arg235, Lys240, Val270, Asp467, and Trp514; that span reads GAGAA.

The protein belongs to the FAD-dependent oxidoreductase family.

It is found in the mitochondrion. Induces apoptosis through a caspase dependent pathway. Reduces mitochondrial membrane potential. The chain is Apoptosis-inducing factor 3 (Aifm3) from Mus musculus (Mouse).